A 100-amino-acid polypeptide reads, in one-letter code: Small ribosomal subunit protein uS14c (100 aa).

This sequence belongs to the universal ribosomal protein uS14 family. Part of the 30S ribosomal subunit.

The protein localises to the plastid. It is found in the chloroplast. Its function is as follows. Binds 16S rRNA, required for the assembly of 30S particles. The chain is Small ribosomal subunit protein uS14c from Anthoceros angustus (Hornwort).